The following is a 508-amino-acid chain: Steroid 17-alpha-hydroxylase/17,20 lyase (508 aa).

A heme-binding site is contributed by Cys-445.

The protein belongs to the cytochrome P450 family. It depends on heme as a cofactor.

It is found in the membrane. It catalyses the reaction a C21-steroid + reduced [NADPH--hemoprotein reductase] + O2 = a 17alpha-hydroxy-C21-steroid + oxidized [NADPH--hemoprotein reductase] + H2O + H(+). It carries out the reaction 17alpha-hydroxyprogesterone + reduced [NADPH--hemoprotein reductase] + O2 = androst-4-ene-3,17-dione + acetate + oxidized [NADPH--hemoprotein reductase] + H2O + 2 H(+). The enzyme catalyses 17alpha-hydroxypregnenolone + reduced [NADPH--hemoprotein reductase] + O2 = 3beta-hydroxyandrost-5-en-17-one + acetate + oxidized [NADPH--hemoprotein reductase] + H2O + 2 H(+). Its pathway is lipid metabolism; steroid biosynthesis. Its function is as follows. Conversion of pregnenolone and progesterone to their 17-alpha-hydroxylated products and subsequently to dehydroepiandrosterone (DHEA) and androstenedione. Catalyzes both the 17-alpha-hydroxylation and the 17,20-lyase reaction. This is Steroid 17-alpha-hydroxylase/17,20 lyase (CYP17A1) from Gallus gallus (Chicken).